The primary structure comprises 314 residues: Olfactory receptor 5G29 (314 aa).

Residues 1–25 are Extracellular-facing; that stretch reads MEEKNQTIVMEFFFLGLTDHLYQKI. Asn5 carries an N-linked (GlcNAc...) asparagine glycan. Residues 26–46 traverse the membrane as a helical segment; sequence ALFITILFVYLVTLGGNLGMI. Over 47–54 the chain is Cytoplasmic; that stretch reads TLIWADPR. Residues 55–75 traverse the membrane as a helical segment; sequence LHTPMYFFLSHLSFVDMCSSS. The Extracellular portion of the chain corresponds to 76-99; it reads SIAPKMLCDIFAEEKRISFMGCAA. Cys97 and Cys189 are disulfide-bonded. The helical transmembrane segment at 100–120 threads the bilayer; sequence QMWFFGFFVGTECFLLASMAY. The Cytoplasmic portion of the chain corresponds to 121-133; sequence DRYTAICKPLLYT. Residues 134–154 form a helical membrane-spanning segment; the sequence is LLMSQRVCVHLVVGPYVFAII. The Extracellular portion of the chain corresponds to 155–196; it reads NITTHTTLAFCLPFCGSNTINHFFCDVSPLLSLACADSWVNK. A helical membrane pass occupies residues 197–217; the sequence is VVLFVLSGAIGVFSGLIIIVS. The Cytoplasmic segment spans residues 218–237; that stretch reads YVSILMTIFKIQTADGKQKA. A helical membrane pass occupies residues 238 to 258; it reads FSTCSSHLSAVSILYGTLFFI. Over 259–271 the chain is Extracellular; that stretch reads YVRPSASFSLNIN. Residues 272–292 traverse the membrane as a helical segment; sequence KMISLFYTVVIPMLNPLIYSL. Over 293–312 the chain is Cytoplasmic; the sequence is RNKEVKGAFRRKVQKKHFPA.

It belongs to the G-protein coupled receptor 1 family.

The protein resides in the cell membrane. Functionally, potential odorant receptor. In Mus musculus (Mouse), this protein is Olfactory receptor 5G29.